A 1111-amino-acid polypeptide reads, in one-letter code: MPHDGHEPPQRIIRLIAVGAGITGLLLCAVVPLLPVKQTTATIRWPQSATRDGWVTQITAPLVSGTPRALDISIPCSAMATLPDSVGLVVSTLPSGGVDTGKSGLFVRANKNAVVVAFRDSVAAVAPRPAVAAGNCSVLHIWANTRGAGANFVGIPGAAGILTAEKKPQVGGIFTDLKVPVQPGLSAHIDIDTRFITAPTAIKKIAVGVGAAAVLIAILALSALDRRNRNGHRLINWRVSMAWLAQWRVILATPPRAGGASRIADGGVLATLLLWHIIGATSSDDGYNLTVARVSSEAGYLANYYRYFGATEAPFDWYFTVLAKLASVSTAGVWMRIPATLAGIACWLIINHWVLRRLGPGTGGLSTNRVAVLTAGAMFLAAWLPFNNGLRPEPLIALGVLFTWVLVERAIALRRLASAATAAVVAILTATLAPQGLIAIAALLTGARAITQTIRRRRTTDGLLAPLLVLAASLSLITLVVFHSQTLATVGESARIKYKVGPTIACYQDFLRYYFLTVESNADGSMTRRFPVLVLLLCMFGVLVVLLRRSRVPGLASGPTWRLIGTTATSLLLLTFTPTKWAIQFGALAGLTGTFGAIAAFAFARISLHTRRNLTVYITALLFVLAWATAGINGWFGVSNYGVPWFDIQPVIAGHPVTSIFLTLSILTGLLAGGQHFRLDYAKHTEVKDTRRNRFLATTPLVVVATTMVLCEVGSLAKGAVARYPLYTTAKANLAALRSGLAPSVCAMADDVLTEPDPNAGMLQPVPGQIFGPTGPLGGMNPIGFKPEGVNDDLKSDPVVSKPGLVNSDASPNKPNVTFSDSAGTAGGKGPVGVNGSHVALPFGLDPDRTPVMGSYGENTLAASATSAWYQLPLHWKESIADRPLVVVSAAGAIWSYKEDGNFIYGQSLKLQWGVTRPDGIIQPLAQVMPIDIGPQPAWRNLRFPLTWAPPEANVARVVAYDPNLSPDQWLAFTPPRVPVLQTLQQLLGSQTPVLMDIATAANFPCQRPFSEHLGIAELPQYRILPDHKQTAASSNLWQSSEAGGPFLFLQALLRTSTISTYLRDDWYRDWGSVEQYYRLVPADQAPEAVVKQGMITVPGWIRRGPIRALP.

Transmembrane regions (helical) follow at residues I12–L34, I205–L224, V333–L355, V370–N387, P394–L413, A423–T445, G462–S484, F530–L547, G554–F576, W581–F603, T615–G637, I652–G674, and F695–A717. Residues G804 to P831 are disordered. Positions S808 to A823 are enriched in polar residues.

This sequence belongs to the emb family.

It is found in the cell membrane. Functionally, arabinosyl transferase responsible for the polymerization of arabinose into the arabinan of arabinogalactan. This Mycobacterium leprae (strain TN) protein is Probable arabinosyltransferase A (embA).